The sequence spans 331 residues: 6-phosphogluconolactonase (331 aa).

It belongs to the cycloisomerase 2 family.

The catalysed reaction is 6-phospho-D-glucono-1,5-lactone + H2O = 6-phospho-D-gluconate + H(+). Its pathway is carbohydrate degradation; pentose phosphate pathway; D-ribulose 5-phosphate from D-glucose 6-phosphate (oxidative stage): step 2/3. In terms of biological role, catalyzes the hydrolysis of 6-phosphogluconolactone to 6-phosphogluconate. This chain is 6-phosphogluconolactonase, found in Citrobacter koseri (strain ATCC BAA-895 / CDC 4225-83 / SGSC4696).